Here is a 400-residue protein sequence, read N- to C-terminus: tRNA-specific 2-thiouridylase MnmA (400 aa).

Residues 19-26 (AMSGGVDS) and leucine 45 each bind ATP. Cysteine 113 (nucleophile) is an active-site residue. Cysteine 113 and cysteine 210 are oxidised to a cystine. Position 137 (glycine 137) interacts with ATP. The segment at 160-162 (RDQ) is interaction with tRNA. Cysteine 210 (cysteine persulfide intermediate) is an active-site residue.

Belongs to the MnmA/TRMU family.

It is found in the cytoplasm. The catalysed reaction is S-sulfanyl-L-cysteinyl-[protein] + uridine(34) in tRNA + AH2 + ATP = 2-thiouridine(34) in tRNA + L-cysteinyl-[protein] + A + AMP + diphosphate + H(+). Its function is as follows. Catalyzes the 2-thiolation of uridine at the wobble position (U34) of tRNA, leading to the formation of s(2)U34. The polypeptide is tRNA-specific 2-thiouridylase MnmA (Nitrobacter hamburgensis (strain DSM 10229 / NCIMB 13809 / X14)).